A 393-amino-acid chain; its full sequence is Tryptophan synthase beta chain (393 aa).

An N6-(pyridoxal phosphate)lysine modification is found at K86.

The protein belongs to the TrpB family. In terms of assembly, tetramer of two alpha and two beta chains. Pyridoxal 5'-phosphate is required as a cofactor.

The catalysed reaction is (1S,2R)-1-C-(indol-3-yl)glycerol 3-phosphate + L-serine = D-glyceraldehyde 3-phosphate + L-tryptophan + H2O. It participates in amino-acid biosynthesis; L-tryptophan biosynthesis; L-tryptophan from chorismate: step 5/5. The beta subunit is responsible for the synthesis of L-tryptophan from indole and L-serine. The sequence is that of Tryptophan synthase beta chain from Alteromonas mediterranea (strain DSM 17117 / CIP 110805 / LMG 28347 / Deep ecotype).